Here is a 276-residue protein sequence, read N- to C-terminus: U6 snRNA phosphodiesterase 1 (276 aa).

The tract at residues 1 to 58 (MIVNYSSSSSEEESGSSSSPSGKRQKLDTETSEALDHGSAQRKVCKSSHLTPRLPLPE) is disordered. The active-site Proton acceptor is the His-131. Residues 131-133 (HLS), Tyr-213, and 215-221 (DPSFHIS) each bind AMP. UMP contacts are provided by residues Tyr-213 and 217–221 (SFHIS). His-219 (proton donor) is an active-site residue.

It belongs to the 2H phosphoesterase superfamily. USB1 family.

Its subcellular location is the nucleus. It catalyses the reaction a 3'-end uridylyl-uridine-RNA = a 3'-end 2',3'-cyclophospho-uridine-RNA + uridine. The enzyme catalyses a 3'-end uridylyl-adenosine-RNA = a 3'-end 2',3'-cyclophospho-uridine-RNA + adenosine. Functionally, 3'-5' RNA exonuclease that trims the 3' end of oligo(U) and oligo(A) tracts of the pre-U6 small nuclear RNA (snRNA) molecule, leading to the formation of a mature U6 snRNA 3' end-terminated with a 2',3'-cyclic phosphate. Participates in the U6 snRNA 3' end processing that prevents U6 snRNA degradation. In addition also removes uridines from the 3' end of U6atac snRNA and possibly the vault RNA VTRNA1-1. This is U6 snRNA phosphodiesterase 1 from Danio rerio (Zebrafish).